The primary structure comprises 565 residues: Sulfite reductase [NADPH] hemoprotein beta-component (565 aa).

Residues C429, C435, C474, and C478 each coordinate [4Fe-4S] cluster. Residue C478 coordinates siroheme.

This sequence belongs to the nitrite and sulfite reductase 4Fe-4S domain family. In terms of assembly, alpha(8)-beta(8). The alpha component is a flavoprotein, the beta component is a hemoprotein. It depends on siroheme as a cofactor. [4Fe-4S] cluster is required as a cofactor.

The enzyme catalyses hydrogen sulfide + 3 NADP(+) + 3 H2O = sulfite + 3 NADPH + 4 H(+). It functions in the pathway sulfur metabolism; hydrogen sulfide biosynthesis; hydrogen sulfide from sulfite (NADPH route): step 1/1. Its function is as follows. Component of the sulfite reductase complex that catalyzes the 6-electron reduction of sulfite to sulfide. This is one of several activities required for the biosynthesis of L-cysteine from sulfate. The chain is Sulfite reductase [NADPH] hemoprotein beta-component from Shewanella baltica (strain OS185).